Here is a 463-residue protein sequence, read N- to C-terminus: Membrane-bound lytic murein transglycosylase F (463 aa).

The signal sequence occupies residues 1–33; that stretch reads MQSQDYKKRLKLQIIIILSIAVMSCGVPNVPTA. Residues 34–272 form a non-LT domain region; that stretch reads LSSLLERESI…VLEDKYFGHI (239 aa). The segment at 273-463 is LT domain; that stretch reads RQFDYVDSRA…LVWLDEQGKI (191 aa). The active site involves Glu-317.

In the N-terminal section; belongs to the bacterial solute-binding protein 3 family. The protein in the C-terminal section; belongs to the transglycosylase Slt family.

The protein resides in the cell outer membrane. It carries out the reaction Exolytic cleavage of the (1-&gt;4)-beta-glycosidic linkage between N-acetylmuramic acid (MurNAc) and N-acetylglucosamine (GlcNAc) residues in peptidoglycan, from either the reducing or the non-reducing ends of the peptidoglycan chains, with concomitant formation of a 1,6-anhydrobond in the MurNAc residue.. Functionally, murein-degrading enzyme that degrades murein glycan strands and insoluble, high-molecular weight murein sacculi, with the concomitant formation of a 1,6-anhydromuramoyl product. Lytic transglycosylases (LTs) play an integral role in the metabolism of the peptidoglycan (PG) sacculus. Their lytic action creates space within the PG sacculus to allow for its expansion as well as for the insertion of various structures such as secretion systems and flagella. This is Membrane-bound lytic murein transglycosylase F from Alteromonas mediterranea (strain DSM 17117 / CIP 110805 / LMG 28347 / Deep ecotype).